Consider the following 144-residue polypeptide: RNA-binding protein 1 (144 aa).

Residues 11 to 84 (CKVYVGNLGS…TRIRVEMSSG (74 aa)) enclose the RRM domain. The tract at residues 78–115 (RVEMSSGRSRDRRRGEGGSSGRSGSGRYRITPSARTTS) is disordered.

The protein belongs to the splicing factor SR family. In terms of assembly, interacts with x16 (via Arg/Ser-rich region). In terms of processing, extensively phosphorylated on serine residues in the RS domain. The tandem heptapeptide repeats in the C-terminal domain (CTD) can be highly phosphorylated. The phosphorylation activates Pol II. Phosphorylation occurs at residues 'Ser-2', 'Ser-5' and 'Ser-7' of the heptapeptide repeat and is mediated by P-TEFb. Dephosphorylated by the INTAC complex when transcripts are unfavorably configured for transcriptional elongation, leading to premature transcription termination: dephosphorylation is mediated by the mts/PP2A component of the INTAC complex. In terms of tissue distribution, ubiquitous.

Its subcellular location is the nucleus. Functionally, contributes to the activation of female-specific DSX splicing in vivo by recognizing the RBP1 target sequences within the purine-rich polypyrimidine tract of the female-specific 3' splice site. The sequence is that of RNA-binding protein 1 (Rbp1) from Drosophila melanogaster (Fruit fly).